A 450-amino-acid polypeptide reads, in one-letter code: Keratin, type I cytoskeletal 25 (450 aa).

The segment covering Met-1–Leu-23 has biased composition (low complexity). A disordered region spans residues Met-1–Gly-26. The interval Met-1–Asn-78 is head. The tract at residues Glu-79–Trp-114 is coil 1A. The IF rod domain occupies Glu-79–Cys-394. Residues Tyr-115–Ile-136 are linker 1. The segment at Ile-137–Leu-228 is coil 1B. The interval Gln-229–Leu-251 is linker 12. The coil 2 stretch occupies residues Leu-252 to Asp-390. The tail stretch occupies residues Asp-391–Asn-450. Residue Ser-442 is modified to Phosphoserine.

The protein belongs to the intermediate filament family. Heterodimer of a type I and a type II keratin. Heterodimer with type II keratin KRT5 leading to the formation of keratin intermediate filament (KIF) network. Interacts with KRT6A to form filaments.

The protein resides in the cytoplasm. Essential for the proper assembly of type I and type II keratin protein complexes and formation of keratin intermediate filaments in the inner root sheath (irs). Plays a role in the cytoskeleton organization. The sequence is that of Keratin, type I cytoskeletal 25 (KRT25) from Pan troglodytes (Chimpanzee).